A 173-amino-acid polypeptide reads, in one-letter code: Helix-loop-helix protein lin-22 (173 aa).

Positions 21–34 (KKIKNKPLMEKKRR) are basic motif. The region spanning 21–78 (KKIKNKPLMEKKRRARINKSLSQLKQILIQDEHKNSIQHSKWEKADILEMAVEYLQQL) is the bHLH domain. The segment at 35-78 (ARINKSLSQLKQILIQDEHKNSIQHSKWEKADILEMAVEYLQQL) is helix-loop-helix motif. The segment covering 83–95 (PCSLSPSTSSIST) has biased composition (low complexity). Residues 83 to 102 (PCSLSPSTSSISTPPTPKEE) form a disordered region.

Expressed mostly in the seam (stem) cells and hypodermis (hyp7), but also to a lesser extent in the intestine.

The protein resides in the nucleus. In terms of biological role, probable transcription factor. During development, required for cell fate specification, probably by promoting or repressing expression of genes involved in specific cell fate. Involved in specifying lineages derived from the epidermal stem cells of the lateral ectoderm, known as seam cells. Modulates symmetric divisions of seam cells, perhaps in concert with the Wnt signaling pathway. May repress expression of homeobox genes mab-5, egl-5 and lin-39. The sequence is that of Helix-loop-helix protein lin-22 from Caenorhabditis elegans.